The sequence spans 67 residues: Cold shock protein (67 aa).

Residues 4–64 (GTVKWFNAEK…GAKGPQATGV (61 aa)) form the CSD domain.

Its subcellular location is the cytoplasm. The sequence is that of Cold shock protein (csp) from Arthrobacter globiformis.